Here is a 261-residue protein sequence, read N- to C-terminus: uncharacterized protein (261 aa).

The span at Thr20–Gln34 shows a compositional bias: polar residues. The disordered stretch occupies residues Thr20–Gly55. Over residues Ser35–Ser51 the composition is skewed to low complexity. A run of 3 helical transmembrane segments spans residues Leu113 to Leu133, Leu183 to Phe200, and Ile204 to Val226.

Belongs to the TVP23 family.

The protein localises to the membrane. This is an uncharacterized protein from Dictyostelium discoideum (Social amoeba).